Reading from the N-terminus, the 397-residue chain is Carbamoyl phosphate synthase small chain (397 aa).

The tract at residues 1 to 204 (MSPLLPSFPF…PAYRTLDTSK (204 aa)) is CPSase. The L-glutamine site is built by Ser-53, Gly-256, and Gly-258. The Glutamine amidotransferase type-1 domain occupies 208–395 (KVVAYDFGVK…MELMNAAKKE (188 aa)). Cys-284 (nucleophile) is an active-site residue. Positions 285, 288, 326, 328, and 329 each coordinate L-glutamine. Catalysis depends on residues His-368 and Glu-370.

It belongs to the CarA family. As to quaternary structure, composed of two chains; the small (or glutamine) chain promotes the hydrolysis of glutamine to ammonia, which is used by the large (or ammonia) chain to synthesize carbamoyl phosphate. Tetramer of heterodimers (alpha,beta)4.

The catalysed reaction is hydrogencarbonate + L-glutamine + 2 ATP + H2O = carbamoyl phosphate + L-glutamate + 2 ADP + phosphate + 2 H(+). It carries out the reaction L-glutamine + H2O = L-glutamate + NH4(+). It participates in amino-acid biosynthesis; L-arginine biosynthesis; carbamoyl phosphate from bicarbonate: step 1/1. Its pathway is pyrimidine metabolism; UMP biosynthesis via de novo pathway; (S)-dihydroorotate from bicarbonate: step 1/3. Functionally, small subunit of the glutamine-dependent carbamoyl phosphate synthetase (CPSase). CPSase catalyzes the formation of carbamoyl phosphate from the ammonia moiety of glutamine, carbonate, and phosphate donated by ATP, constituting the first step of 2 biosynthetic pathways, one leading to arginine and/or urea and the other to pyrimidine nucleotides. The small subunit (glutamine amidotransferase) binds and cleaves glutamine to supply the large subunit with the substrate ammonia. This is Carbamoyl phosphate synthase small chain from Polynucleobacter asymbioticus (strain DSM 18221 / CIP 109841 / QLW-P1DMWA-1) (Polynucleobacter necessarius subsp. asymbioticus).